Consider the following 204-residue polypeptide: Large ribosomal subunit protein bL25 (204 aa).

It belongs to the bacterial ribosomal protein bL25 family. CTC subfamily. Part of the 50S ribosomal subunit; part of the 5S rRNA/L5/L18/L25 subcomplex. Contacts the 5S rRNA. Binds to the 5S rRNA independently of L5 and L18.

This is one of the proteins that binds to the 5S RNA in the ribosome where it forms part of the central protuberance. The polypeptide is Large ribosomal subunit protein bL25 (Pseudomonas aeruginosa (strain LESB58)).